Reading from the N-terminus, the 764-residue chain is 5-methyltetrahydropteroyltriglutamate--homocysteine methyltransferase (764 aa).

Residues 16 to 19 (RELK) and K115 each bind 5-methyltetrahydropteroyltri-L-glutamate. L-homocysteine contacts are provided by residues 435 to 437 (IGS) and E488. L-methionine-binding positions include 435–437 (IGS) and E488. 5-methyltetrahydropteroyltri-L-glutamate is bound by residues 519-520 (RC) and W565. D603 contributes to the L-homocysteine binding site. Residue D603 coordinates L-methionine. E609 contacts 5-methyltetrahydropteroyltri-L-glutamate. Residues H645, C647, and E669 each contribute to the Zn(2+) site. The Proton donor role is filled by H698. C730 is a Zn(2+) binding site.

It belongs to the vitamin-B12 independent methionine synthase family. Zn(2+) is required as a cofactor.

The catalysed reaction is 5-methyltetrahydropteroyltri-L-glutamate + L-homocysteine = tetrahydropteroyltri-L-glutamate + L-methionine. The protein operates within amino-acid biosynthesis; L-methionine biosynthesis via de novo pathway; L-methionine from L-homocysteine (MetE route): step 1/1. Functionally, catalyzes the transfer of a methyl group from 5-methyltetrahydrofolate to homocysteine resulting in methionine formation. This is 5-methyltetrahydropteroyltriglutamate--homocysteine methyltransferase from Burkholderia pseudomallei (strain K96243).